The primary structure comprises 229 residues: Potassium/proton antiporter CemA (229 aa).

The next 3 helical transmembrane spans lie at 6 to 26 (AFIP…ISLC), 107 to 127 (ILHF…SFWG), and 189 to 209 (ILSG…KYWI).

Belongs to the CemA family.

The protein localises to the plastid. Its subcellular location is the chloroplast inner membrane. The catalysed reaction is K(+)(in) + H(+)(out) = K(+)(out) + H(+)(in). Its function is as follows. Contributes to K(+)/H(+) antiport activity by supporting proton efflux to control proton extrusion and homeostasis in chloroplasts in a light-dependent manner to modulate photosynthesis. Prevents excessive induction of non-photochemical quenching (NPQ) under continuous-light conditions. Indirectly promotes efficient inorganic carbon uptake into chloroplasts. This is Potassium/proton antiporter CemA from Barbarea verna (Land cress).